The following is a 477-amino-acid chain: Glycogen synthase (477 aa).

Residue Lys-15 participates in ADP-alpha-D-glucose binding.

The protein belongs to the glycosyltransferase 1 family. Bacterial/plant glycogen synthase subfamily.

It carries out the reaction [(1-&gt;4)-alpha-D-glucosyl](n) + ADP-alpha-D-glucose = [(1-&gt;4)-alpha-D-glucosyl](n+1) + ADP + H(+). It functions in the pathway glycan biosynthesis; glycogen biosynthesis. In terms of biological role, synthesizes alpha-1,4-glucan chains using ADP-glucose. The polypeptide is Glycogen synthase (Streptococcus pneumoniae (strain ATCC 700669 / Spain 23F-1)).